Reading from the N-terminus, the 419-residue chain is GTPase Obg (419 aa).

The Obg domain occupies 1–156; it reads MRFVDYVSIE…FYLDLQLKVM (156 aa). The OBG-type G domain occupies 157-334; sequence ADIGLVGKPN…LGEKQKKLEI (178 aa). GTP contacts are provided by residues 163–170, 188–192, 209–212, 278–281, and 315–317; these read GKPNAGKS, FTTLA, DLPG, NKCD, and NII. Positions 170 and 190 each coordinate Mg(2+). The OCT domain maps to 342-419; the sequence is IEFNLKAPFL…RIYEFEFHWN (78 aa).

The protein belongs to the TRAFAC class OBG-HflX-like GTPase superfamily. OBG GTPase family. Monomer. Mg(2+) serves as cofactor.

Its subcellular location is the cytoplasm. In terms of biological role, an essential GTPase which binds GTP, GDP and possibly (p)ppGpp with moderate affinity, with high nucleotide exchange rates and a fairly low GTP hydrolysis rate. Plays a role in control of the cell cycle, stress response, ribosome biogenesis and in those bacteria that undergo differentiation, in morphogenesis control. This chain is GTPase Obg, found in Mesomycoplasma hyopneumoniae (strain J / ATCC 25934 / NCTC 10110) (Mycoplasma hyopneumoniae).